The sequence spans 579 residues: PCNA-interacting partner (579 aa).

Residues 480 to 543 (TSFGNVHLDR…AKIPKKSNDS (64 aa)) form a disordered region. The segment covering 486 to 496 (HLDRSKNEKVS) has biased composition (basic and acidic residues).

Belongs to the PARI family. In terms of assembly, interacts with RAD51 and PCNA. Interacts with PARP1. Interacts with TASOR. Restricted to testis. Overexpressed in multiple cancer cells.

Its subcellular location is the cytoplasm. It is found in the nucleus. Its function is as follows. Required to suppress inappropriate homologous recombination, thereby playing a central role DNA repair and in the maintenance of genomic stability. Antagonizes homologous recombination by interfering with the formation of the RAD51-DNA homologous recombination structure. Binds single-strand DNA and poly(A) homopolymers. Positively regulate the poly(ADP-ribosyl)ation activity of PARP1; however such function may be indirect. In Homo sapiens (Human), this protein is PCNA-interacting partner (PARPBP).